We begin with the raw amino-acid sequence, 417 residues long: 4-hydroxy-3-methylbut-2-en-1-yl diphosphate synthase (flavodoxin) (417 aa).

[4Fe-4S] cluster is bound by residues cysteine 304, cysteine 307, cysteine 350, and glutamate 357.

It belongs to the IspG family. [4Fe-4S] cluster is required as a cofactor.

The catalysed reaction is (2E)-4-hydroxy-3-methylbut-2-enyl diphosphate + oxidized [flavodoxin] + H2O + 2 H(+) = 2-C-methyl-D-erythritol 2,4-cyclic diphosphate + reduced [flavodoxin]. It participates in isoprenoid biosynthesis; isopentenyl diphosphate biosynthesis via DXP pathway; isopentenyl diphosphate from 1-deoxy-D-xylulose 5-phosphate: step 5/6. In terms of biological role, converts 2C-methyl-D-erythritol 2,4-cyclodiphosphate (ME-2,4cPP) into 1-hydroxy-2-methyl-2-(E)-butenyl 4-diphosphate. This chain is 4-hydroxy-3-methylbut-2-en-1-yl diphosphate synthase (flavodoxin), found in Rhizobium rhizogenes (strain K84 / ATCC BAA-868) (Agrobacterium radiobacter).